The chain runs to 765 residues: Protein transport protein Sec23A (765 aa).

Residue Thr-2 is modified to N-acetylthreonine. Cys-61, Cys-66, Cys-85, and Cys-88 together coordinate Zn(2+). Thr-308 is subject to Phosphothreonine. The Gelsolin-like repeat unit spans residues Pro-632 to Leu-718.

It belongs to the SEC23/SEC24 family. SEC23 subfamily. COPII is composed of at least five proteins: the Sec23/24 complex, the Sec13/31 complex and Sar1. Interacts with SEC23IP. Interacts with HTR4. Interacts with SEC16A. Interacts with SLC6A4. Interacts (as part of the Sec23/24 complex) with SEC22B; recruits SEC22B into COPII-coated vesicles and allows the transport of this cargo from the endoplasmic reticulum to the Golgi. Interacts (via Gelsolin-like repeat) with MIA2 and MIA3; specifically involved in the transport of large cargos like the collagen COL7A1. Interacts with DDHD1. Interacts with TMEM39A. Interacts with SACM1L; this interaction is reduced in the absence of TMEM39A. Interacts with kinase FAM20C; transport of FAM20C from the endoplasmic reticulum to the Golgi is likely to be mediated by COPII vesicles. As to expression, high levels in brain and fibroblasts.

It is found in the cytoplasmic vesicle. The protein resides in the COPII-coated vesicle membrane. The protein localises to the endoplasmic reticulum membrane. Its subcellular location is the cytoplasm. It localises to the cytosol. Component of the coat protein complex II (COPII) which promotes the formation of transport vesicles from the endoplasmic reticulum (ER). The coat has two main functions, the physical deformation of the endoplasmic reticulum membrane into vesicles and the selection of cargo molecules for their transport to the Golgi complex. Required for the translocation of insulin-induced glucose transporter SLC2A4/GLUT4 to the cell membrane. The polypeptide is Protein transport protein Sec23A (Mus musculus (Mouse)).